Here is a 1648-residue protein sequence, read N- to C-terminus: eIF-2-alpha kinase GCN2 (1648 aa).

The segment at 1-26 (MAGGRGASGRGRAEPQESYSQRQDHE) is disordered. The 113-residue stretch at 25-137 (HELQALEAIY…HHVQSFLSEH (113 aa)) folds into the RWD domain. Positions 146-205 (HEEMLERQAQEKQQRLLEARRKEEQEQREILHEIQRRKEEIKEEKKRKEMAKQERLEITS) form a coiled coil. The residue at position 230 (Ser-230) is a Phosphoserine. Protein kinase domains follow at residues 286–538 (VGSD…HSFI) and 589–1000 (FEEL…SELL). ATP contacts are provided by residues 595–603 (LGKGAFGAV) and Lys-618. The tract at residues 661–784 (PAVPGTPPPD…CNQKDGSHEI (124 aa)) is disordered. Thr-666 bears the Phosphothreonine mark. Composition is skewed to polar residues over residues 673-686 (PQAQDSPATCGKTS) and 704-722 (LSSSVEWSTSAERSTSTRF). Composition is skewed to acidic residues over residues 730–739 (SSDEEDEDER) and 753–763 (SDSDIIFDNED). A compositionally biased stretch (basic and acidic residues) spans 775-784 (CNQKDGSHEI). The active-site Proton acceptor is Asp-846. A Phosphothreonine modification is found at Thr-869. Residues Thr-898 and Thr-903 each carry the phosphothreonine; by autocatalysis modification. The tract at residues 1021-1492 (IDGKAYRTMM…DHVMQKLRTK (472 aa)) is histidyl-tRNA synthetase-like. The residue at position 1258 (Lys-1258) is an N6-acetyllysine.

Belongs to the protein kinase superfamily. Ser/Thr protein kinase family. GCN2 subfamily. Homodimer; homodimerization is important for kinase activation by uncharged tRNAs. Interacts with GCN1; this interaction stimulates EIF2AK4/GCN2 kinase activity and is impaired by IMPACT upon a variety of stress conditions, such as amino acid depletion, UV-C irradiation, proteasome inhibitor treatment and glucose deprivation. Interacts with DNAJC3; this interaction inhibits EIF2AK4/GCN2 kinase activity during endoplasmic reticulum (ER), hypothermic and amino acid-starving stress conditions. Interacts with MAP3K20; activates EIF2AK4/GCN2 kinase activity in response to moderate ribotoxic stress. Autophosphorylated; autophosphorylation on Thr-898 is increased upon amino acid starvation and in UV irradiation cells and inhibited in presence of IMPACT. In terms of tissue distribution, expressed in liver. Expressed predominantly in the hippocampal CA1 region and the dentate gyrus, and to a lesser degree in CA3 (at protein level). Expressed in liver, lung, brain, kidney, skeletal muscle and testis. Expressed weakly in heart and spleen. Expressed in the hippocampal CA1 and CA3 regions, the dentate gyrus and cerebellum. Isoform 1 is widely expressed. Isoform 1 is expressed in brain, liver, skeletal muscle and testis. Isoform 3 is expressed in lung, brain, testis, prostate and choroid plexus. Isoform 4 is expressed in muscle, lung, kidney, brain, testis and prostate.

Its subcellular location is the cytoplasm. It carries out the reaction L-seryl-[protein] + ATP = O-phospho-L-seryl-[protein] + ADP + H(+). The enzyme catalyses L-threonyl-[protein] + ATP = O-phospho-L-threonyl-[protein] + ADP + H(+). (Microbial infection) Kinase activity is enhanced by alphavirus genomic RNA sequences. Kinase activity is stimulated upon binding to uncharged tRNAs. Activated by serum starvation (in vitro). Its function is as follows. Metabolic-stress sensing protein kinase that phosphorylates the alpha subunit of eukaryotic translation initiation factor 2 (EIF2S1/eIF-2-alpha) in response to low amino acid availability. Plays a role as an activator of the integrated stress response (ISR) required for adaptation to amino acid starvation. EIF2S1/eIF-2-alpha phosphorylation in response to stress converts EIF2S1/eIF-2-alpha into a global protein synthesis inhibitor, leading to a global attenuation of cap-dependent translation, and thus to a reduced overall utilization of amino acids, while concomitantly initiating the preferential translation of ISR-specific mRNAs, such as the transcriptional activator ATF4, and hence allowing ATF4-mediated reprogramming of amino acid biosynthetic gene expression to alleviate nutrient depletion. Required for the translational induction of protein kinase PRKCH following amino acid starvation. Binds uncharged tRNAs. Involved in cell cycle arrest by promoting cyclin D1 mRNA translation repression after the unfolded protein response pathway (UPR) activation or cell cycle inhibitor CDKN1A/p21 mRNA translation activation in response to amino acid deprivation. Plays a role in the consolidation of synaptic plasticity, learning as well as formation of long-term memory. Plays a role in neurite outgrowth inhibition. Plays a role in feeding behavior to maintain amino acid homeostasis; contributes to the innate aversion toward diets of imbalanced amino acid composition. Plays a proapoptotic role in response to glucose deprivation. Promotes global cellular protein synthesis repression in response to UV irradiation independently of the stress-activated protein kinase/c-Jun N-terminal kinase (SAPK/JNK) and p38 MAPK signaling pathways. In terms of biological role, (Microbial infection) Plays a role in the antiviral response against alphavirus infection; impairs early viral mRNA translation of the incoming genomic virus RNA, thus preventing alphavirus replication. (Microbial infection) Plays a role in modulating the adaptive immune response to Yellow fever virus infection; promotes dendritic cells to initiate autophagy and antigene presentation to both CD4(+) and CD8(+) T-cells under amino acid starvation. In Mus musculus (Mouse), this protein is eIF-2-alpha kinase GCN2.